The following is a 383-amino-acid chain: MLYSPRLTDQILIVAGEASADLHAARTLHELQRLRPGITAFGVGGPRLREAGLEALAPAEDISVMGLAEVLPRIPRILGILRMLGRAAAERRPRAALLVDLPDFNLRLAARLKKLGIPVVYYVSPTIWAWRQGRAKKIARVVDRMLCILPFEERFYEGTGVSARFVGHPFAERPPPGPAEAYRSALGLPASRTTIAMVPGSRPSELKRLLPPMLQAAERLRAAHPDAQFVVPVAPTLDRAALEPYLAAHRTLEVRLVDGRTEEVVGASDAALVKSGTSTLEAGLMLRPMVVVYKLSWLSYAVARMLVKIAHVALVNILAGRGIVPELLQGDASPERMAAEVERLLGDRAAREAQIAALREVRASLGEPGAPLRVAEEVLGVMR.

This sequence belongs to the LpxB family.

It catalyses the reaction a lipid X + a UDP-2-N,3-O-bis[(3R)-3-hydroxyacyl]-alpha-D-glucosamine = a lipid A disaccharide + UDP + H(+). Its pathway is bacterial outer membrane biogenesis; LPS lipid A biosynthesis. In terms of biological role, condensation of UDP-2,3-diacylglucosamine and 2,3-diacylglucosamine-1-phosphate to form lipid A disaccharide, a precursor of lipid A, a phosphorylated glycolipid that anchors the lipopolysaccharide to the outer membrane of the cell. This chain is Lipid-A-disaccharide synthase, found in Anaeromyxobacter dehalogenans (strain 2CP-1 / ATCC BAA-258).